An 865-amino-acid chain; its full sequence is Xylosyltransferase 2 (865 aa).

The Cytoplasmic segment spans residues 1 to 15 (MVASARVQKLVRRYK). Residues 16 to 36 (LAIATALAILLLQGLVVWSFS) form a helical; Signal-anchor for type II membrane protein membrane-spanning segment. The Lumenal portion of the chain corresponds to 37 to 865 (GLEEDEAGEK…GPVKADGRLR (829 aa)). The interval 41-157 (DEAGEKGRQR…EGAPQPTDNG (117 aa)) is disordered. Residues 53–65 (RPLDPGEGSKDTD) show a composition bias toward basic and acidic residues. The span at 73 to 82 (STGRRHGRWR) shows a compositional bias: basic residues. Asparagine 122 carries an N-linked (GlcNAc...) asparagine glycan. The span at 125–137 (GAAAGEALVGAAG) shows a compositional bias: low complexity. Cystine bridges form between cysteine 162/cysteine 190, cysteine 206/cysteine 448, cysteine 467/cysteine 480, and cysteine 469/cysteine 478. Residues valine 239, aspartate 267, and 296-298 (TIW) contribute to the UDP-alpha-D-xylose site. N-linked (GlcNAc...) asparagine glycosylation is present at asparagine 327. UDP-alpha-D-xylose is bound at residue 400–401 (DW). UDP-alpha-D-xylose contacts are provided by residues serine 481 and 504 to 505 (RK). Cystine bridges form between cysteine 581/cysteine 833 and cysteine 826/cysteine 839. An N-linked (GlcNAc...) asparagine glycan is attached at asparagine 683. Positions 846–865 (SLSPDPKSELGPVKADGRLR) are disordered.

This sequence belongs to the glycosyltransferase 14 family. XylT subfamily. As to quaternary structure, monomer. The cofactor is Mg(2+). It depends on Mn(2+) as a cofactor. Contains disulfide bonds.

The protein localises to the golgi apparatus membrane. The protein resides in the secreted. It catalyses the reaction UDP-alpha-D-xylose + L-seryl-[protein] = 3-O-(beta-D-xylosyl)-L-seryl-[protein] + UDP + H(+). The protein operates within glycan metabolism; chondroitin sulfate biosynthesis. It participates in glycan metabolism; heparan sulfate biosynthesis. Functionally, catalyzes the first step in the biosynthesis of chondroitin sulfate, heparan sulfate and dermatan sulfate proteoglycans, such as DCN. Transfers D-xylose from UDP-D-xylose to specific serine residues of the core protein. The protein is Xylosyltransferase 2 (XYLT2) of Pan troglodytes (Chimpanzee).